A 114-amino-acid polypeptide reads, in one-letter code: uncharacterized protein (114 aa).

Positions 90–114 (VESSQKRKPEESTIGMDAPKKMKRG) are disordered.

This is an uncharacterized protein from Caenorhabditis elegans.